The sequence spans 104 residues: Replication restart protein PriB (104 aa).

An SSB domain is found at 1-101 (MTNRLELSGV…LHADHIEIIC (101 aa)).

It belongs to the PriB family. In terms of assembly, homodimer. Interacts with PriA and DnaT. Component of the replication restart primosome. Primosome assembly occurs via a 'hand-off' mechanism. PriA binds to replication forks, subsequently PriB then DnaT bind; DnaT then displaces ssDNA to generate the helicase loading substrate.

Functionally, involved in the restart of stalled replication forks, which reloads the replicative helicase on sites other than the origin of replication; the PriA-PriB pathway is the major replication restart pathway. During primosome assembly it facilitates complex formation between PriA and DnaT on DNA; stabilizes PriA on DNA. Stimulates the DNA unwinding activity of PriA helicase. This Photobacterium profundum (strain SS9) protein is Replication restart protein PriB.